We begin with the raw amino-acid sequence, 149 residues long: Large ribosomal subunit protein eL24B (149 aa).

Ser-50 carries the post-translational modification Phosphoserine. Residues 96–149 form a disordered region; it reads QRPEVRAAARAAALKQRKDKRAASESEKKAIKAKSAASSARGQAIKNAKVAARR. Over residues 116-125 the composition is skewed to basic and acidic residues; it reads RAASESEKKA.

The protein belongs to the eukaryotic ribosomal protein eL24 family. Component of the large ribosomal subunit (LSU). Mature yeast ribosomes consist of a small (40S) and a large (60S) subunit. The 40S small subunit contains 1 molecule of ribosomal RNA (18S rRNA) and at least 33 different proteins. The large 60S subunit contains 3 rRNA molecules (25S, 5.8S and 5S rRNA) and at least 46 different proteins.

It is found in the cytoplasm. Its function is as follows. Component of the ribosome, a large ribonucleoprotein complex responsible for the synthesis of proteins in the cell. The small ribosomal subunit (SSU) binds messenger RNAs (mRNAs) and translates the encoded message by selecting cognate aminoacyl-transfer RNA (tRNA) molecules. The large subunit (LSU) contains the ribosomal catalytic site termed the peptidyl transferase center (PTC), which catalyzes the formation of peptide bonds, thereby polymerizing the amino acids delivered by tRNAs into a polypeptide chain. The nascent polypeptides leave the ribosome through a tunnel in the LSU and interact with protein factors that function in enzymatic processing, targeting, and the membrane insertion of nascent chains at the exit of the ribosomal tunnel. The polypeptide is Large ribosomal subunit protein eL24B (rpl2402) (Schizosaccharomyces pombe (strain 972 / ATCC 24843) (Fission yeast)).